Consider the following 152-residue polypeptide: Probable prefoldin subunit 5 (152 aa).

It belongs to the prefoldin subunit alpha family. In terms of assembly, heterohexamer of two PFD-alpha type and four PFD-beta type subunits.

Functionally, binds specifically to cytosolic chaperonin (c-CPN) and transfers target proteins to it. Binds to nascent polypeptide chain and promotes folding in an environment in which there are many competing pathways for nonnative proteins. The polypeptide is Probable prefoldin subunit 5 (pfd-5) (Caenorhabditis elegans).